The sequence spans 158 residues: Cyclic pyranopterin monophosphate synthase (158 aa).

Substrate is bound by residues 74–76 and 112–113; these read MCH and ME. The active site involves aspartate 127.

It belongs to the MoaC family. Homohexamer; trimer of dimers.

The enzyme catalyses (8S)-3',8-cyclo-7,8-dihydroguanosine 5'-triphosphate = cyclic pyranopterin phosphate + diphosphate. It functions in the pathway cofactor biosynthesis; molybdopterin biosynthesis. Its function is as follows. Catalyzes the conversion of (8S)-3',8-cyclo-7,8-dihydroguanosine 5'-triphosphate to cyclic pyranopterin monophosphate (cPMP). This Helicobacter pylori (strain P12) protein is Cyclic pyranopterin monophosphate synthase.